Here is a 647-residue protein sequence, read N- to C-terminus: DEAD-box ATP-dependent RNA helicase 18 (647 aa).

A Q motif motif is present at residues 23–51; sequence FSELSPALSPEVVKALKGGGFRRCTPVQA. The Helicase ATP-binding domain maps to 54–232; sequence IPLLLSHKDV…KAGLRNPVRV (179 aa). Residue 67–74 coordinates ATP; the sequence is AATGSGKT. The DEAD box motif lies at 180 to 183; it reads DEAD. The Helicase C-terminal domain maps to 274–430; that stretch reads QLVDFLVQNN…DIVPQIRSAA (157 aa). A coiled-coil region spans residues 507–582; sequence KYKDKAREKQ…RLLKKLKRGV (76 aa). Residues 512–545 are compositionally biased toward basic and acidic residues; sequence AREKQRQKTLKRKAEELALRPEIEKRRKAPEKPE. Disordered stretches follow at residues 512–565 and 590–647; these read AREK…KEDM and KLTG…TRRR. The segment covering 596-610 has biased composition (acidic residues); sequence ESDDDDSSDGGDSDL. Residues 619-633 are compositionally biased toward basic residues; that stretch reads KVLKKIKQKGKAKGS.

The protein belongs to the DEAD box helicase family. DDX55/SPB4 subfamily. Interacts with BRI1. Post-translationally, phosphorylated.

It catalyses the reaction ATP + H2O = ADP + phosphate + H(+). This is DEAD-box ATP-dependent RNA helicase 18 from Oryza sativa subsp. japonica (Rice).